The sequence spans 136 residues: Non-structural protein 1 (136 aa).

This sequence belongs to the pneumovirus non-structural protein 1 family. In terms of assembly, monomer. Homomultimer. Heteromultimer with NS2. Interacts with the matrix protein M. Interacts with host ELOC and CUL2; this interaction allows NS1 to form an active E3 ligase with ELOC and CUL2. Interacts with host IRF3; this interaction leads to the disrupted association of IRF3 with CREBBP and thus reduced binding of IRF3 to the IFN-beta promoter. Interacts with host MAVS; this interaction prevents MAVS binding to RIGI and inhibits signaling pathway leading to interferon production. Interacts with host TRIM25 (via SPRY domain); this interaction suppresses RIGI ubiquitination and results in decreased interaction between RIGI and MAVS.

The protein localises to the host cytoplasm. The protein resides in the host mitochondrion. Its subcellular location is the host nucleus. In terms of biological role, plays a major role in antagonizing the type I IFN-mediated antiviral response by degrading or inhibiting multiple cellular factors required for either IFN induction or response pathways. Acts cooperatively with NS2 to repress activation and nuclear translocation of host IFN-regulatory factor IRF3. Also disrupts the association of IRF3 with CREBBP. Interacts with host mitochondrial-associated membrane (MAM) MAVS and prevents the interaction with RIGI. Interacts with TRIM25 to suppress TRIM25-mediated RIGI ubiquitination and thereby RIGI-MAVS interaction. Together with NS2, participates in the proteasomal degradation of host STAT2, IRF3, IRF7, TBK1 and RIGI through a NS-degradasome involving CUL2 and Elongin-C. The degradasome requires an intact mitochondrial MAVS. Decreases the levels of host TRAF3 and IKBKE/IKK-epsilon. As functions other than disruptions of the type I IFN-mediated antiviral signaling pathways, induces host SOCS1 and SOCS3 expression. Suppresses premature apoptosis by an NF-kappa-B-dependent, interferon-independent mechanism and thus facilitates virus growth. Additionally, NS1 may serve some inhibitory role in viral transcription and RNA replication. Suppresses proliferation and activation of host CD103+ CD8+ cytotoxic T-lymphocytes and Th17 helper T-lymphocytes. The sequence is that of Non-structural protein 1 (1C) from Ovis aries (Sheep).